A 245-amino-acid chain; its full sequence is Phosducin (245 aa).

Residues 1-67 (MEEARRQSLE…SRDDKDSKER (67 aa)) are disordered. In terms of domain architecture, Phosducin spans 1-241 (MEEARRQSLE…IHALEQTSME (241 aa)). Residues 58-67 (SRDDKDSKER) are compositionally biased toward basic and acidic residues. At Ser-73 the chain carries Phosphoserine; by PKA. Residues 111-245 (YGFVYELETG…EQTSMEEDVE (135 aa)) form a thioredoxin fold region.

The protein belongs to the phosducin family. In terms of assembly, forms a complex with the beta and gamma subunits of the GTP-binding protein, transducin. Interacts with CRX. Light-induced changes in cyclic nucleotide levels modulate the phosphorylation of this protein by cAMP kinase.

It is found in the cytoplasm. The protein localises to the cytosol. Its subcellular location is the nucleus. It localises to the cell projection. The protein resides in the cilium. It is found in the photoreceptor outer segment. The protein localises to the photoreceptor inner segment. Functionally, may participate in the regulation of visual phototransduction or in the integration of photoreceptor metabolism. Inhibits the transcriptional activation activity of the cone-rod homeobox CRX. This is Phosducin (PDC) from Equus caballus (Horse).